The chain runs to 190 residues: Guanylate kinase (190 aa).

Residues 7–186 (GKLIVFSAPS…AVDDVEAAIV (180 aa)) enclose the Guanylate kinase-like domain. 14-21 (APSGAGKT) is a binding site for ATP.

It belongs to the guanylate kinase family.

The protein resides in the cytoplasm. It catalyses the reaction GMP + ATP = GDP + ADP. In terms of biological role, essential for recycling GMP and indirectly, cGMP. The protein is Guanylate kinase of Chlorobium chlorochromatii (strain CaD3).